Reading from the N-terminus, the 445-residue chain is Phosphoglucosamine mutase (445 aa).

Ser-102 functions as the Phosphoserine intermediate in the catalytic mechanism. The Mg(2+) site is built by Ser-102, Asp-241, Asp-243, and Asp-245. Ser-102 is modified (phosphoserine).

The protein belongs to the phosphohexose mutase family. Requires Mg(2+) as cofactor. Activated by phosphorylation.

The enzyme catalyses alpha-D-glucosamine 1-phosphate = D-glucosamine 6-phosphate. Its function is as follows. Catalyzes the conversion of glucosamine-6-phosphate to glucosamine-1-phosphate. The polypeptide is Phosphoglucosamine mutase (Aliivibrio fischeri (strain MJ11) (Vibrio fischeri)).